Reading from the N-terminus, the 612-residue chain is Cryptochrome-2 (612 aa).

Residues 1–485 (MKMDKKTIVW…TARELLAKAI (485 aa)) form a CNT2, binds chromophores to sense blue light and mediate CRY dimerization region. The 130-residue stretch at 5 to 134 (KKTIVWFRRD…SVQSYNGDLL (130 aa)) folds into the Photolyase/cryptochrome alpha/beta domain. Tyrosine 232 contacts FAD. Residues asparagine 235 and serine 243 each coordinate Mg(2+). Residue 244-248 (TSLLS) participates in FAD binding. Position 355 (histidine 355) interacts with Mg(2+). FAD contacts are provided by residues asparagine 356 and 387 to 389 (DAD). 356–357 (NR) is a binding site for ATP. Aspartate 406 provides a ligand contact to ATP. The interval 486–612 (SRTREAQIMI…TTSLGKNGCK (127 aa)) is CCT2/CCE2, mediates blue light signaling. The disordered stretch occupies residues 539-576 (GSKRVKPEEEEERDMKKSRGFDERELFSTAESSSSSSV). Residues 541-555 (KRVKPEEEEERDMKK) carry the Nuclear localization signal motif. The span at 551-564 (RDMKKSRGFDEREL) shows a compositional bias: basic and acidic residues. Serine 587 bears the Phosphoserine; by CK1 mark. The disordered stretch occupies residues 590–612 (KNLEGIQDSSDQITTSLGKNGCK). Polar residues predominate over residues 596–612 (QDSSDQITTSLGKNGCK). Residues serine 598 and serine 599 each carry the phosphoserine modification. A Phosphothreonine; by CK1 modification is found at threonine 603. Serine 605 carries the phosphoserine modification.

It belongs to the DNA photolyase class-1 family. In terms of assembly, homodimer. Blue-light dependent dimerization. Interacts with COP1 and PHYB in the nucleus. Binds reversibly to CIBs proteins such as BHLH63/CIB1, BHLH78/CIB2, BHLH74/CIB4 and BHLH76/CIB5 after blue light illumination to stimulate their transcription factor activities. Interacts with PIF4 and PIF5 in the nucleus in response to low blue light (LBL). Binds to SPA1 in response to blue light, this interaction prevents SPA1/COP1 complex formation but stimulates interaction with COP1, and thus avoid COP1-dependent degradation of the transcription factors CO and HY5 by the proteasome and promotes hypocotyl elongation and floral initiation. Binding to ATP mediates conformational changes which facilitate flavin binding. Interacts with BIC1 in both darkness and light. Interacts with NRP. FAD serves as cofactor. (6R)-5,10-methylene-5,6,7,8-tetrahydrofolate is required as a cofactor. Phosphorylated by CK1.3 and CK1.4; in response to blue light. Required for degradation. Adopts an open conformation when phosphorylated upon photoexcitation and thus interacts with signaling partner proteins. Not autophosphorylated, even in complex with FAD cofactor. Post-translationally, ubiquitinated; in response to blue light. As to expression, mostly expressed in the shoot meristems and root tips, and, to a lower extent, in the cotyledons, hypocotyls, and roots.

It is found in the nucleus. The protein localises to the PML body. Its subcellular location is the cytoplasm. Its function is as follows. Photoreceptor that mediates primarily blue light inhibition of hypocotyl elongation and photoperiodic control of floral initiation, and regulates other light responses, including circadian rhythms, tropic growth, stomata opening, guard cell development, root development, bacterial and viral pathogen responses, abiotic stress responses, cell cycles, programmed cell death, apical dominance, fruit and ovule development, seed dormancy, and magnetoreception. Photoexcited cryptochromes interact with signaling partner proteins to alter gene expression at both transcriptional and post-translational levels and, consequently, regulate the corresponding metabolic and developmental programs. Blue-light absorbing flavoprotein that activates reversible flavin photoreduction via an electron transport chain comprising a tryptophan triad (W-321, W-374 and W-397), or via an alternative electron transport that involves small metabolites, including NADPH, NADH, and ATP. The half-life of the activated signaling state is about 16 minutes. Perceives low blue light (LBL) and responds by directly contacting two bHLH transcription factors, PIF4 and PIF5, at chromatin on E-box variant 5'-CA[CT]GTG-3' to promote their activity and stimulate specific gene expression to adapt global physiology (e.g. hypocotyl elongation and hyponastic growth in low blue light). In response to blue light, binds to CIB proteins (e.g. BHLH63/CIB1 and BHLH76/CIB5) to activate transcription and floral initiation. Mediates blue light-induced gene expression, floral initiation and hypocotyl elongation through the interaction with SPA1 that prevents formation of SPA1/COP1 complex but stimulates COP1 binding, and thus inhibits COP1-mediated degradation of transcription factors (e.g. CO and HY5). Promotes flowering time in continuous light (LL). Involved in shortening the circadian clock period, especially at 27 degrees Celsius, in blue light (BL). Required to maintain clock genes expression rhythm. Triggers nuclear accumulation of ROS in response to blue light illumination. Involved in blue light-dependent stomatal opening, transpiration and inhibition of stem and root growth, probably by regulating abscisic acid (ABA). Regulates the timing of flowering by promoting the expression of 'FLOWERING LOCUS T' (FT) in vascular bundles. Negatively regulated by 'FLOWERING LOCUS C' (FLC). General positive regulator of reversible low light-induced chromatin decompaction. Involved in triggering chromatin decondensation during floral transition. Together with phototropins, involved in phototropism regulation by various blue light fluence; blue light attenuates phototropism in high fluence rates (100 umol.m-2.s-1) but enhances phototropism in low fluence rates (&lt;1.0 umol.m-2.s-1). The effect of near-null magnetic field on flowering is altered by changes of blue light cycle and intensity in a CRY1/CRY2-dependent manner. Involved in the strigolactone signaling that regulates hypocotyl growth in response to blue light. In terms of biological role, confers resistance to turnip crinkle virus (TCV) by preventing COP1-mediated proteasome-mediated degradation of RPP8/HRT, thus promoting its stability in light. Exposure to darkness or blue-light induces degradation of CRY2, and in turn of RPP8/HRT, resulting in susceptibility to TCV. This chain is Cryptochrome-2, found in Arabidopsis thaliana (Mouse-ear cress).